Here is a 319-residue protein sequence, read N- to C-terminus: Phospho-N-acetylmuramoyl-pentapeptide-transferase (319 aa).

The next 10 helical transmembrane spans lie at 1 to 21, 53 to 73, 77 to 97, 117 to 137, 140 to 160, 172 to 192, 195 to 215, 221 to 241, 249 to 269, and 298 to 318; these read MSIL…FLLM, TMGG…VGAW, LNGT…IGMW, FLAQ…EGFQ, FGLT…MVGF, GLVT…ALVQ, TEVA…FPFN, IFMG…VALV, LIIG…VAYF, and GVFW…ILFL.

Belongs to the glycosyltransferase 4 family. MraY subfamily. Requires Mg(2+) as cofactor.

It localises to the cell membrane. It carries out the reaction UDP-N-acetyl-alpha-D-muramoyl-L-alanyl-gamma-D-glutamyl-L-lysyl-D-alanyl-D-alanine + di-trans,octa-cis-undecaprenyl phosphate = Mur2Ac(oyl-L-Ala-gamma-D-Glu-L-Lys-D-Ala-D-Ala)-di-trans,octa-cis-undecaprenyl diphosphate + UMP. It participates in cell wall biogenesis; peptidoglycan biosynthesis. In terms of biological role, catalyzes the initial step of the lipid cycle reactions in the biosynthesis of the cell wall peptidoglycan: transfers peptidoglycan precursor phospho-MurNAc-pentapeptide from UDP-MurNAc-pentapeptide onto the lipid carrier undecaprenyl phosphate, yielding undecaprenyl-pyrophosphoryl-MurNAc-pentapeptide, known as lipid I. The chain is Phospho-N-acetylmuramoyl-pentapeptide-transferase from Limosilactobacillus fermentum (strain NBRC 3956 / LMG 18251) (Lactobacillus fermentum).